Here is a 97-residue protein sequence, read N- to C-terminus: MKIRPLHDRVIVKRKEVESKSAGGIVLTGSAAGKSTRGEVVAVGHGRILENGDVKPLDVKVGDTVIFNDGYGVKAEKIDNEEVLIMSESDILAIVEA.

The protein belongs to the GroES chaperonin family. In terms of assembly, heptamer of 7 subunits arranged in a ring. Interacts with the chaperonin GroEL.

It is found in the cytoplasm. In terms of biological role, together with the chaperonin GroEL, plays an essential role in assisting protein folding. The GroEL-GroES system forms a nano-cage that allows encapsulation of the non-native substrate proteins and provides a physical environment optimized to promote and accelerate protein folding. GroES binds to the apical surface of the GroEL ring, thereby capping the opening of the GroEL channel. In Edwardsiella ictaluri (strain 93-146), this protein is Co-chaperonin GroES.